A 37-amino-acid polypeptide reads, in one-letter code: uncharacterized protein (37 aa).

The disordered stretch occupies residues 1 to 37; sequence MGQVEKARQGQFARPHHSDSQRRVRAWSRIQRRARSF. A compositionally biased stretch (basic residues) spans 23–37; it reads RVRAWSRIQRRARSF.

This is an uncharacterized protein from Bacillus phage phi105 (Bacteriophage phi-105).